Reading from the N-terminus, the 389-residue chain is SH3 and F-BAR domain-containing protein DDB_G0274695 (389 aa).

The region spanning 3-258 is the F-BAR domain; that stretch reads EQFKDNFWGP…VITQIDKLED (256 aa). Residues 119–192 are a coiled coil; the sequence is KLNKERKDME…QDYRDSVNKL (74 aa). Residues 300-328 are compositionally biased toward low complexity; sequence LTSSVSSNSLTSSYNSATTTPTPAPRSTP. Residues 300–329 are disordered; the sequence is LTSSVSSNSLTSSYNSATTTPTPAPRSTPI. The 58-residue stretch at 332-389 folds into the SH3 domain; it reads SKKKQAKALYDYVGSDATELDFFAGDIITILDEDESGWFRGELGDRIGLYPSNYCEPI.

The chain is SH3 and F-BAR domain-containing protein DDB_G0274695 from Dictyostelium discoideum (Social amoeba).